The following is a 403-amino-acid chain: Formate-dependent phosphoribosylglycinamide formyltransferase (403 aa).

N(1)-(5-phospho-beta-D-ribosyl)glycinamide-binding positions include 27–28 and Glu87; that span reads EL. ATP is bound by residues Arg120, Lys161, 166–171, 201–204, and Glu209; these read SSGKGQ and EGFV. The ATP-grasp domain occupies 125–319; that stretch reads RLAAEELGLP…EFELHARAIL (195 aa). 2 residues coordinate Mg(2+): Glu278 and Glu290. N(1)-(5-phospho-beta-D-ribosyl)glycinamide contacts are provided by residues Asp297, Lys366, and 373-374; that span reads RR. The tract at residues 382-403 is disordered; sequence GPDVETARSRAREAASRVEPVA. Over residues 386 to 397 the composition is skewed to basic and acidic residues; that stretch reads ETARSRAREAAS.

The protein belongs to the PurK/PurT family. Homodimer.

The catalysed reaction is N(1)-(5-phospho-beta-D-ribosyl)glycinamide + formate + ATP = N(2)-formyl-N(1)-(5-phospho-beta-D-ribosyl)glycinamide + ADP + phosphate + H(+). Its pathway is purine metabolism; IMP biosynthesis via de novo pathway; N(2)-formyl-N(1)-(5-phospho-D-ribosyl)glycinamide from N(1)-(5-phospho-D-ribosyl)glycinamide (formate route): step 1/1. Its function is as follows. Involved in the de novo purine biosynthesis. Catalyzes the transfer of formate to 5-phospho-ribosyl-glycinamide (GAR), producing 5-phospho-ribosyl-N-formylglycinamide (FGAR). Formate is provided by PurU via hydrolysis of 10-formyl-tetrahydrofolate. This Rhodococcus jostii (strain RHA1) protein is Formate-dependent phosphoribosylglycinamide formyltransferase.